A 715-amino-acid chain; its full sequence is Fatty acid oxidation complex subunit alpha (715 aa).

The interval 1-194 (MHEQRAKPSA…RLGLVDDAVP (194 aa)) is enoyl-CoA hydratase. The interval 310–715 (HALHRIGILG…QGERFYPQGS (406 aa)) is 3-hydroxyacyl-CoA dehydrogenase.

This sequence in the N-terminal section; belongs to the enoyl-CoA hydratase/isomerase family. The protein in the central section; belongs to the 3-hydroxyacyl-CoA dehydrogenase family. In terms of assembly, heterotetramer of two alpha chains (FadJ) and two beta chains (FadI).

Its subcellular location is the cytoplasm. It catalyses the reaction a (3S)-3-hydroxyacyl-CoA = a (2E)-enoyl-CoA + H2O. The enzyme catalyses a 4-saturated-(3S)-3-hydroxyacyl-CoA = a (3E)-enoyl-CoA + H2O. The catalysed reaction is a (3S)-3-hydroxyacyl-CoA + NAD(+) = a 3-oxoacyl-CoA + NADH + H(+). It carries out the reaction (3S)-3-hydroxybutanoyl-CoA = (3R)-3-hydroxybutanoyl-CoA. The protein operates within lipid metabolism; fatty acid beta-oxidation. In terms of biological role, catalyzes the formation of a hydroxyacyl-CoA by addition of water on enoyl-CoA. Also exhibits 3-hydroxyacyl-CoA epimerase and 3-hydroxyacyl-CoA dehydrogenase activities. The polypeptide is Fatty acid oxidation complex subunit alpha (Serratia proteamaculans (strain 568)).